The chain runs to 183 residues: Ubiquitin carboxyl-terminal hydrolase 17-like protein 23 (183 aa).

A USP domain is found at alanine 80 to valine 183.

The protein belongs to the peptidase C19 family. USP17 subfamily.

The protein localises to the nucleus. The protein resides in the endoplasmic reticulum. This Homo sapiens (Human) protein is Ubiquitin carboxyl-terminal hydrolase 17-like protein 23 (USP17L23).